The chain runs to 656 residues: Solute carrier family 5 member 4A (656 aa).

Residues Met1–Asp28 lie on the Cytoplasmic side of the membrane. Residues Ile29–Met47 traverse the membrane as a helical segment. The Extracellular portion of the chain corresponds to Leu48 to Ser64. The helical transmembrane segment at Met65–Val85 threads the bilayer. The Cytoplasmic portion of the chain corresponds to Gly86 to Ser105. Residues Phe106 to Met126 traverse the membrane as a helical segment. Residues Thr127–Leu171 lie on the Extracellular side of the membrane. A helical transmembrane segment spans residues Ala172–Phe191. Topologically, residues Thr192–Ala208 are cytoplasmic. The chain crosses the membrane as a helical span at residues Val209–Tyr229. The Extracellular portion of the chain corresponds to Glu230–Val270. Asn248 carries N-linked (GlcNAc...) asparagine glycosylation. A helical transmembrane segment spans residues Thr271–Trp291. Residues Cys292–Cys314 are Cytoplasmic-facing. A helical membrane pass occupies residues Ile315 to Ile334. The Extracellular segment spans residues Ser335–Leu423. The helical transmembrane segment at Ile424 to Ile443 threads the bilayer. Residues Val444–Tyr455 are Cytoplasmic-facing. Residues Thr456–Phe476 form a helical membrane-spanning segment. The Extracellular segment spans residues Cys477 to Tyr526. Residues Leu527 to Leu547 form a helical membrane-spanning segment. Residues Thr548–Arg634 are Cytoplasmic-facing. The interval Asp574 to Glu593 is disordered. Residues Thr635–Phe655 form a helical membrane-spanning segment.

It belongs to the sodium:solute symporter (SSF) (TC 2.A.21) family. Expressed in small intestine. Expressed in kidney.

It localises to the cell membrane. Not inhibited by phlorizin. In terms of biological role, does not function as sodium/D-glucose symporter. Generates D-glucose-induced depolarization in a pH-dependent manner, with activity in acidic conditions (pH 5) but not neutral conditions. In Mus musculus (Mouse), this protein is Solute carrier family 5 member 4A.